A 593-amino-acid chain; its full sequence is Tyrosine-protein phosphatase non-receptor type 11 (593 aa).

Thr2 carries the N-acetylthreonine modification. 2 consecutive SH2 domains span residues Trp6 to Leu102 and Trp112 to Leu216. A phosphotyrosine mark is found at Tyr62 and Tyr66. Residues Phe247 to Ala517 form the Tyrosine-protein phosphatase domain. Residues Asp425, Cys459–Arg465, and Gln506 each bind substrate. The active-site Phosphocysteine intermediate is the Cys459. 2 positions are modified to phosphotyrosine; by PDGFR: Tyr542 and Tyr580.

Belongs to the protein-tyrosine phosphatase family. Non-receptor class 2 subfamily. As to quaternary structure, interacts with phosphorylated SIT1, LIME1, BCAR3 and MZPL1. Interacts with FCRL4, FCRL6, ANKHD1, SHB, INPP5D/SHIP1 and CD84. Interacts with MILR1 (tyrosine-phosphorylated). Interacts with FLT1 (tyrosine-phosphorylated), FLT3 (tyrosine-phosphorylated), FLT4 (tyrosine-phosphorylated), KIT and GRB2. Interacts with PTPNS1. Interacts with KIR2DL1; the interaction is enhanced by ARRB2. Interacts (via SH2 domain) with TEK/TIE2 (tyrosine phosphorylated). Interacts with GAB2. Interacts with TERT; the interaction retains TERT in the nucleus. Interacts with PECAM1 and FER. Interacts with EPHA2 (activated); participates in PTK2/FAK1 dephosphorylation in EPHA2 downstream signaling. Interacts with PDGFRA (tyrosine phosphorylated). Interacts with PDGFRB (tyrosine phosphorylated); this interaction increases the PTPN11 phosphatase activity. Interacts with ROS1; this mediates PTPN11 phosphorylation. Interacts with CEACAM1 (via cytoplasmic domain); this interaction depends on the monomer/dimer equilibrium and is phosphorylation-dependent. Interacts with MPIG6B (via ITIM motif). Interacts with SIGLEC10. Interacts with CLEC12B (via ITIM motif); this interaction triggers dephosphorylation and activation of PTPN11. Interacts (via SH2 domains) with NEDD9/CAS-L; the interaction is enhanced when NEDD9/CAS-L is tyrosine phosphorylated. In terms of processing, phosphorylated on Tyr-542 and Tyr-580 upon receptor protein tyrosine kinase activation; which creates a binding site for GRB2 and other SH2-containing proteins. Phosphorylated upon activation of the receptor-type kinase FLT3. Phosphorylated upon activation of the receptor-type kinase PDGFRA. Phosphorylated by activated PDGFRB. As to expression, expressed in brain, muscle and lung.

Its subcellular location is the cytoplasm. The catalysed reaction is O-phospho-L-tyrosyl-[protein] + H2O = L-tyrosyl-[protein] + phosphate. Its activity is regulated as follows. Inhibited by orthovanadate, molybdate and spermidine. Its function is as follows. Acts downstream of various receptor and cytoplasmic protein tyrosine kinases to participate in the signal transduction from the cell surface to the nucleus. Positively regulates MAPK signal transduction pathway. Dephosphorylates GAB1, ARHGAP35 and EGFR. Dephosphorylates ROCK2 at 'Tyr-722' resulting in stimulation of its RhoA binding activity. Dephosphorylates CDC73. Dephosphorylates SOX9 on tyrosine residues, leading to inactivate SOX9 and promote ossification. Dephosphorylates tyrosine-phosphorylated NEDD9/CAS-L. The polypeptide is Tyrosine-protein phosphatase non-receptor type 11 (Ptpn11) (Rattus norvegicus (Rat)).